The chain runs to 124 residues: UPF0102 protein TM1040_0449 (124 aa).

The protein belongs to the UPF0102 family.

This chain is UPF0102 protein TM1040_0449, found in Ruegeria sp. (strain TM1040) (Silicibacter sp.).